The primary structure comprises 86 residues: MAETKARIATGKVVSDKMDKTITVLVERTEKHPLYGKFIRRSTKLHAHDENNECQIGDLVKVVETRPYSKSKTWKLVQVVEKAAAV.

It belongs to the universal ribosomal protein uS17 family. In terms of assembly, part of the 30S ribosomal subunit.

One of the primary rRNA binding proteins, it binds specifically to the 5'-end of 16S ribosomal RNA. This is Small ribosomal subunit protein uS17 from Marinomonas sp. (strain MWYL1).